A 259-amino-acid chain; its full sequence is Phosphate import ATP-binding protein PstB (259 aa).

Residues 13-254 (IAVKNLNFFY…PTRKETEDYI (242 aa)) enclose the ABC transporter domain. 45 to 52 (GPSGCGKS) serves as a coordination point for ATP.

Belongs to the ABC transporter superfamily. Phosphate importer (TC 3.A.1.7) family. In terms of assembly, the complex is composed of two ATP-binding proteins (PstB), two transmembrane proteins (PstC and PstA) and a solute-binding protein (PstS).

Its subcellular location is the cell inner membrane. The catalysed reaction is phosphate(out) + ATP + H2O = ADP + 2 phosphate(in) + H(+). Its function is as follows. Part of the ABC transporter complex PstSACB involved in phosphate import. Responsible for energy coupling to the transport system. The sequence is that of Phosphate import ATP-binding protein PstB from Albidiferax ferrireducens (strain ATCC BAA-621 / DSM 15236 / T118) (Rhodoferax ferrireducens).